The chain runs to 428 residues: MKKFDKSIAAFEEAQDLMPGGVNSPVRAFKSVGMNPLFMERGKGSKVYDIDGNEYIDYVLSWGPLIHGHANDRVVEALKSVAERGTSFGAPTEIENKLAKLVIERVPSIEIVRMVNSGTEATMSALRLARGYTGRNKILKFIGCYHGHGDSLLIKAGSGVATLGLPDSPGVPEGVAKNTITVAYNDLESVKYAFEQFGDDIACVIVEPVAGNMGVVPPQPGFLEGLREVTEQNGALLIFDEVMTGFRVAYNCGQGYYGVTPDLTCLGKVIGGGLPVGAYGGKAEIMRQIAPSGPIYQAGTLSGNPLAMAAGYETLVQLTPESYVEFERKAEMLEAGLRKAAEKHGIPHHINRAGSMIGIFFTDEPVINYDAAKSSNLEFFAAYYREMVEQGVFLPPSQFEGLFLSTAHSDADIEATIAAAEIAMSKLK.

Position 268 is an N6-(pyridoxal phosphate)lysine (Lys-268).

This sequence belongs to the class-III pyridoxal-phosphate-dependent aminotransferase family. HemL subfamily. Homodimer. The cofactor is pyridoxal 5'-phosphate.

The protein localises to the cytoplasm. The catalysed reaction is (S)-4-amino-5-oxopentanoate = 5-aminolevulinate. Its pathway is porphyrin-containing compound metabolism; protoporphyrin-IX biosynthesis; 5-aminolevulinate from L-glutamyl-tRNA(Glu): step 2/2. The protein is Glutamate-1-semialdehyde 2,1-aminomutase 1 of Bacillus cereus (strain G9842).